The sequence spans 331 residues: tRNA-cytidine(32) 2-sulfurtransferase (331 aa).

The PP-loop motif motif lies at 71-76 (SGGKDS). Residues Cys146, Cys149, and Cys237 each coordinate [4Fe-4S] cluster.

This sequence belongs to the TtcA family. In terms of assembly, homodimer. Requires Mg(2+) as cofactor. [4Fe-4S] cluster serves as cofactor.

It is found in the cytoplasm. The catalysed reaction is cytidine(32) in tRNA + S-sulfanyl-L-cysteinyl-[cysteine desulfurase] + AH2 + ATP = 2-thiocytidine(32) in tRNA + L-cysteinyl-[cysteine desulfurase] + A + AMP + diphosphate + H(+). It functions in the pathway tRNA modification. Functionally, catalyzes the ATP-dependent 2-thiolation of cytidine in position 32 of tRNA, to form 2-thiocytidine (s(2)C32). The sulfur atoms are provided by the cysteine/cysteine desulfurase (IscS) system. This is tRNA-cytidine(32) 2-sulfurtransferase from Burkholderia multivorans (strain ATCC 17616 / 249).